Reading from the N-terminus, the 949-residue chain is Collagen alpha-2(I) chain (949 aa).

The segment at 1–949 is disordered; sequence SGGFDFSFLP…FGYEGDFYRA (949 aa). 4 positions are modified to 4-hydroxyproline: Pro-10, Pro-13, Pro-34, and Pro-40. Residues 27–66 show a composition bias toward low complexity; it reads LMGPRGPPGASGAPGPQGFQGPAGEPGEPGQTGPAGARGP. The residue at position 95 (Lys-95) is a 5-hydroxylysine; alternate. Residue Lys-95 is glycosylated (O-linked (Gal...) hydroxylysine; alternate). Low complexity-rich tracts occupy residues 147 to 162 and 208 to 229; these read SVGP…SAGP and PGAN…AGAP. Positions 263–272 are enriched in gly residues; the sequence is GESGGKGEPG. Positions 273 to 283 are enriched in low complexity; that stretch reads SAGPQGPPGSS. The segment covering 292 to 313 has biased composition (gly residues); it reads NGEGSTGPTGPPGLRGGPGSRG. 2 positions are modified to 4-hydroxyproline: Pro-348 and Pro-351. Low complexity predominate over residues 377–396; the sequence is LPGIDGRPGPIGPAGARGEA. Residues 435 to 444 show a composition bias toward gly residues; the sequence is GVQGGKGEQG. 2 stretches are compositionally biased toward low complexity: residues 490–507 and 519–529; these read PGES…SRGP and EPGVVGAPGTA. Residues 530–539 are compositionally biased toward gly residues; sequence GPAGSGGLPG. Low complexity-rich tracts occupy residues 562–606 and 613–633; these read VGTT…PRGS and VGPA…QPGA. Residues 634–643 are compositionally biased toward basic and acidic residues; that stretch reads KGERGTKGPK. The span at 651 to 661 shows a compositional bias: low complexity; that stretch reads PTGPVGSAGPA. Gly residues predominate over residues 671 to 680; it reads GSRGDGGPPG. Positions 682-691 are enriched in low complexity; that stretch reads TGFPGAAGRT. A compositionally biased stretch (gly residues) spans 722–736; that stretch reads GPVGRGETGAGGPPG. Composition is skewed to low complexity over residues 737-771, 779-792, and 810-825; these read FTGE…LGLP, LPGV…PGPL, and EPGP…ALGP. Basic and acidic residues predominate over residues 835–846; the sequence is RGDKGEPGEKGP. Positions 921–931 are enriched in pro residues; that stretch reads PAGPPGPPGPP.

The protein belongs to the fibrillar collagen family. As to quaternary structure, trimers of one alpha 2(I) and two alpha 1(I) chains. Interacts (via C-terminus) with TMEM131 (via PapD-L domain); the interaction is direct and is involved in assembly and TRAPPIII ER-to-Golgi transport complex-dependent secretion of collagen. In terms of processing, prolines at the third position of the tripeptide repeating unit (G-X-Y) are hydroxylated in some or all of the chains. As to expression, expressed in bones.

The protein localises to the secreted. It is found in the extracellular space. The protein resides in the extracellular matrix. Functionally, type I collagen is a member of group I collagen (fibrillar forming collagen). This is Collagen alpha-2(I) chain from Acratocnus ye (Hispaniolan ground sloth).